The primary structure comprises 440 residues: Thymidine phosphorylase (440 aa).

This sequence belongs to the thymidine/pyrimidine-nucleoside phosphorylase family. Homodimer.

The catalysed reaction is thymidine + phosphate = 2-deoxy-alpha-D-ribose 1-phosphate + thymine. The protein operates within pyrimidine metabolism; dTMP biosynthesis via salvage pathway; dTMP from thymine: step 1/2. In terms of biological role, the enzymes which catalyze the reversible phosphorolysis of pyrimidine nucleosides are involved in the degradation of these compounds and in their utilization as carbon and energy sources, or in the rescue of pyrimidine bases for nucleotide synthesis. The polypeptide is Thymidine phosphorylase (Enterobacter sp. (strain 638)).